The following is a 184-amino-acid chain: GTP-binding protein Rheb (184 aa).

Lys-8 participates in a covalent cross-link: Glycyl lysine isopeptide (Lys-Gly) (interchain with G-Cter in ubiquitin). Positions 16 and 17 each coordinate GDP. Residue Ser-16 participates in GTP binding. GTP-binding residues include Gly-18, Lys-19, Ser-20, Ser-21, Val-32, Tyr-35, Thr-38, Asn-119, and Asp-122. GDP is bound by residues Lys-19, Ser-20, and Ser-21. Ser-20 contacts Mg(2+). The Effector region signature appears at 35–43 (YDPTIENTF). Thr-38 is a binding site for GDP. Residue Thr-38 coordinates Mg(2+). Asp-122 contributes to the GDP binding site. Residue Ser-130 is modified to Phosphoserine; by MAPKAPK5. Residue Ala-150 coordinates GDP. GTP is bound at residue Ala-150. Cys-181 is subject to Cysteine methyl ester. Cys-181 carries the S-farnesyl cysteine lipid modification. The propeptide at 182–184 (SVM) is removed in mature form.

It belongs to the small GTPase superfamily. Rheb family. In terms of assembly, associates with the mTORC1 complex (MTOR, MLST8 and RPTOR) in a guanyl nucleotide-independent manner. Interacts with TSC2. Interacts with MCRS1; the interaction maintains RHEB at the lysosome in its active GTP-bound form and prevents its interaction with the mTORC1 complex inhibitor TSC2, ensuring activation of the mTORC1 complex by RHEB. Interacts (when prenylated) with PDE6D; this promotes release from membranes. In terms of processing, farnesylation is important for efficiently activating mTORC1-mediated signaling. Polyubiquitinated in response to amino acid, promoting its interaction with MTOR and mTORC1 activation. Deubiquitination by ATXN3 promotes recruitment of the TSC-TBC complex and RHEB inactivation by TSC2. Monoubiquitinated at Lys-8 by RNF152, promoting its association with the TSC-TBC complex. Deubiquitinated at Lys-8 by USP4, promoting mTORC1 activation. Post-translationally, phosphorylation by MAPKAPK5 impairs GTP-binding and inactivation. In terms of tissue distribution, expressed at high levels in normal adult cortex as well as a number of peripheral tissues, including lung and intestine.

The protein resides in the endomembrane system. It is found in the lysosome membrane. Its subcellular location is the golgi apparatus membrane. The protein localises to the endoplasmic reticulum membrane. It localises to the cytoplasm. The protein resides in the cytosol. The enzyme catalyses GTP + H2O = GDP + phosphate + H(+). Its activity is regulated as follows. Alternates between an inactive form bound to GDP and an active form bound to GTP. Inactivated by the TSC-TBC complex via the GTPase activating protein (GAP) domain of TSC2. Autoinhibited by Tyr-35, which constrains the active site conformation, restricting the access of the catalytic Asp-65 to the nucleotide-binding pocket. Small GTPase that acts as an allosteric activator of the canonical mTORC1 complex, an evolutionarily conserved central nutrient sensor that stimulates anabolic reactions and macromolecule biosynthesis to promote cellular biomass generation and growth. In response to nutrients, growth factors or amino acids, specifically activates the protein kinase activity of MTOR, the catalytic component of the mTORC1 complex: acts by causing a conformational change that allows the alignment of residues in the active site of MTOR, thereby enhancing the phosphorylation of ribosomal protein S6 kinase (RPS6KB1 and RPS6KB2) and EIF4EBP1 (4E-BP1). RHEB is also required for localization of the TSC-TBC complex to lysosomal membranes. In response to starvation, RHEB is inactivated by the TSC-TBC complex, preventing activation of mTORC1. Has low intrinsic GTPase activity. This chain is GTP-binding protein Rheb, found in Rattus norvegicus (Rat).